The following is a 201-amino-acid chain: FMN-dependent NADH:quinone oxidoreductase (201 aa).

Residues Ser-10, 16–18, 96–99, and 140–143 contribute to the FMN site; these read SQS, MYNF, and SRGG.

It belongs to the azoreductase type 1 family. Homodimer. The cofactor is FMN.

It carries out the reaction 2 a quinone + NADH + H(+) = 2 a 1,4-benzosemiquinone + NAD(+). The enzyme catalyses N,N-dimethyl-1,4-phenylenediamine + anthranilate + 2 NAD(+) = 2-(4-dimethylaminophenyl)diazenylbenzoate + 2 NADH + 2 H(+). In terms of biological role, quinone reductase that provides resistance to thiol-specific stress caused by electrophilic quinones. Also exhibits azoreductase activity. Catalyzes the reductive cleavage of the azo bond in aromatic azo compounds to the corresponding amines. In Pectobacterium atrosepticum (strain SCRI 1043 / ATCC BAA-672) (Erwinia carotovora subsp. atroseptica), this protein is FMN-dependent NADH:quinone oxidoreductase.